Here is a 471-residue protein sequence, read N- to C-terminus: 3-isopropylmalate dehydratase large subunit (471 aa).

[4Fe-4S] cluster-binding residues include cysteine 347, cysteine 407, and cysteine 410.

This sequence belongs to the aconitase/IPM isomerase family. LeuC type 1 subfamily. In terms of assembly, heterodimer of LeuC and LeuD. [4Fe-4S] cluster serves as cofactor.

It carries out the reaction (2R,3S)-3-isopropylmalate = (2S)-2-isopropylmalate. It functions in the pathway amino-acid biosynthesis; L-leucine biosynthesis; L-leucine from 3-methyl-2-oxobutanoate: step 2/4. Its function is as follows. Catalyzes the isomerization between 2-isopropylmalate and 3-isopropylmalate, via the formation of 2-isopropylmaleate. This is 3-isopropylmalate dehydratase large subunit from Granulibacter bethesdensis (strain ATCC BAA-1260 / CGDNIH1).